Reading from the N-terminus, the 304-residue chain is Type II restriction enzyme LlaDCHI (304 aa).

Belongs to the DpnII type II restriction endonuclease family.

The enzyme catalyses Endonucleolytic cleavage of DNA to give specific double-stranded fragments with terminal 5'-phosphates.. A P subtype restriction enzyme that recognizes the double-stranded unmethylated sequence 5'-GATC-3' and cleaves before G-1. The sequence is that of Type II restriction enzyme LlaDCHI (llaDCHIR) from Lactococcus lactis subsp. cremoris (Streptococcus cremoris).